The primary structure comprises 1496 residues: MTRILSVFKTAKTGVLNAAAHRYRGFSKAGVRLMSVKAQTANLVLEDGTKIKGYSFGHPASVAGEVIFNTGLGGYVEAVTDPSYHGQILTLTNPIIGNGGAPDTKARDAYGLMKYIESENIQASGLLVLDYSHEYSHWGAVKSLSEWLHEEKVPALCGIDTRMLAKKIRDNKGAVLGKIEFEGQPVEFIDPNKRNLIAEVSTKETKVFGKGNPVRIVAVDCGVKHNIIRQLVKRGAEVHLVPWNHDFSQMEYDGLLITSGPGNPELAKPLIQNLKKVFQSDRPEPIFGICKGNEIAALAAGGKTYRLPMANRGQNQPVMITLNGQAFITAQNHAYAVDNNSLPAGWKPLFVNINDQSNEGIMHETKPIFTSQFHPEANPGPVDTEFLFDVYMSLIKKGKGTTLTSVMPKPALQSKRIDVAKVLILGSGGLSIGQAGEFDYSGSQAVKAMKEENVKTVLMNPNIASVQTNEVGLKQADTVYFLPITPQFVTEVIKAEKTDGIILGMGGQTALNCGVELFKRGVLKEYGVRVLGTSVESIMFTEDRQLFSDKLNEIKEPIAPSFAVESVKDALEAADKIGYPVMIRSAYALGGLGSGLCPDKETLTDLATKALAMTNQILVERSVVGWKEIEYEVVRDAADNCVTVCNMENVDAMGVHTGDSIVVAPCQTLSNEECQMLRAVSIKVVRHLGIVGECNIQFALHPTSLEYVIIEVNARLSRSSALASKATGYPLAFIAAKIALGIPLPEIKNVVSGKTTACFEPSLDYMVTKIPRWDLDRFHGASGLIGSSMKSVGEVMAIGRTFEESFQKALRMCHPSVDGFTSNLPMNKAWSSDVNLRKEMAEPTSTRMYSMAKAIQSGISLDEINKLTAIDKWFLYKMQGILNMEKTLKGSRSESVPEETLRRAKQIGFSDRYIGKCLGLSETQTRELRLNKNVKPWVKQIDTLAAEYPAITNYLYLTYNGQEHDIKFDDHGMMVLGCGPYHIGSSVEFDWCAVSSIRTLRHVGKKTVVVNCNPETVSTDFDECDKLYFEELSQERIMDVFQLEQCDGCIISVGGQIPNNLAVPLYKNGVKIMGTSPMQIDRAEDRSIFSAVLDELQIAQAPWKAVNSLDDALQFTKTVGYPCLLRPSYVLSGSAMNVVYGEEELKTFLAEATRVSQEHPVVITKFIEGAREVEMDAVGKEGRVISHAISEHVEDAGVHSGDATLMIPTQSISQGAIEKVKIATKKIATAFAISGPFNVQFLVRGNDVLVIECNLRASRSFPFVSKTLGVDFIDVATKVMIGEKIDESSLPTLERPVIPADYVGIKAPMFSWPRLRGADPVLKCEMASTGEVACFGQNVYSAFLKAMISTGFKLPQKGILIGIQHSFRPHFLGTAQTLKDEGFKLYATEATADWLNANDITATPVAWPSQEGQSGPSSIYKLIKEGNIDMVINLPNNNTKYVRDNFAIRRTAVDTGTALLTNFQVVKMFAEAIKYSGDLDAKSLFHYRQFGGAKPS.

A mitochondrion-targeting transit peptide spans 1–33 (MTRILSVFKTAKTGVLNAAAHRYRGFSKAGVRL). The interval 34-214 (MSVKAQTANL…TKVFGKGNPV (181 aa)) is anthranilate phosphoribosyltransferase homolog. The 187-residue stretch at 215-401 (RIVAVDCGVK…MSLIKKGKGT (187 aa)) folds into the Glutamine amidotransferase type-1 domain. The active-site For GATase activity is the C290. 2 ATP-grasp domains span residues 548-740 (SDKL…KIAL) and 1090-1281 (SAVL…KVMI). Residues 1352-1496 (FKLPQKGILI…YRQFGGAKPS (145 aa)) enclose the MGS-like domain. Residues T1388, T1391, W1407, N1433, N1436, and N1445 each contribute to the N-acetyl-L-glutamate site.

The protein resides in the mitochondrion. It catalyses the reaction hydrogencarbonate + NH4(+) + 2 ATP = carbamoyl phosphate + 2 ADP + phosphate + 2 H(+). Its activity is regulated as follows. Requires N-acetyl-L-glutamate (NAG) as an allosteric activator. Functionally, involved in the urea cycle of ureotelic animals where the enzyme plays an important role in removing excess ammonia from the cell. The protein is Carbamoyl-phosphate synthase [ammonia], mitochondrial of Aquarana catesbeiana (American bullfrog).